The primary structure comprises 306 residues: Phosphatidate cytidylyltransferase (306 aa).

Residues 1–28 (MTTNDAGTGNPAEQPARGAKQQPATETS) are disordered. A run of 8 helical transmembrane segments spans residues 36-56 (AAIV…VFVP), 82-102 (GYLI…WLTW), 103-123 (PFGA…CMIW), 151-171 (ATVF…MLVY), 180-200 (FCMM…GVLF), 218-238 (FAGS…FLVG), 241-261 (PWIG…GDLV), and 285-305 (MDRL…LTLL).

It belongs to the CDS family.

It localises to the cell membrane. It catalyses the reaction a 1,2-diacyl-sn-glycero-3-phosphate + CTP + H(+) = a CDP-1,2-diacyl-sn-glycerol + diphosphate. It functions in the pathway phospholipid metabolism; CDP-diacylglycerol biosynthesis; CDP-diacylglycerol from sn-glycerol 3-phosphate: step 3/3. The sequence is that of Phosphatidate cytidylyltransferase (cdsA) from Mycobacterium bovis (strain ATCC BAA-935 / AF2122/97).